A 91-amino-acid polypeptide reads, in one-letter code: Small ribosomal subunit protein uS19 (91 aa).

The protein belongs to the universal ribosomal protein uS19 family.

In terms of biological role, protein S19 forms a complex with S13 that binds strongly to the 16S ribosomal RNA. The protein is Small ribosomal subunit protein uS19 of Pseudomonas putida (strain ATCC 700007 / DSM 6899 / JCM 31910 / BCRC 17059 / LMG 24140 / F1).